Consider the following 120-residue polypeptide: NAD(P)H-quinone oxidoreductase subunit 3, chloroplastic (120 aa).

Transmembrane regions (helical) follow at residues 9–29 (IFWA…LISG), 64–84 (MFAL…PWAM), and 88–108 (VLGV…ILGL).

It belongs to the complex I subunit 3 family. NDH is composed of at least 16 different subunits, 5 of which are encoded in the nucleus.

The protein localises to the plastid. Its subcellular location is the chloroplast thylakoid membrane. The enzyme catalyses a plastoquinone + NADH + (n+1) H(+)(in) = a plastoquinol + NAD(+) + n H(+)(out). It carries out the reaction a plastoquinone + NADPH + (n+1) H(+)(in) = a plastoquinol + NADP(+) + n H(+)(out). Its function is as follows. NDH shuttles electrons from NAD(P)H:plastoquinone, via FMN and iron-sulfur (Fe-S) centers, to quinones in the photosynthetic chain and possibly in a chloroplast respiratory chain. The immediate electron acceptor for the enzyme in this species is believed to be plastoquinone. Couples the redox reaction to proton translocation, and thus conserves the redox energy in a proton gradient. This is NAD(P)H-quinone oxidoreductase subunit 3, chloroplastic from Aethionema cordifolium (Lebanon stonecress).